A 699-amino-acid chain; its full sequence is (E2-independent) E3 ubiquitin-conjugating enzyme FATS (699 aa).

The segment at 48–116 is required for interaction with p53/TP53; the sequence is MISSIVISQM…LGIPAPSDER (69 aa). Disordered regions lie at residues 107 to 134, 443 to 473, and 528 to 569; these read LGIP…GGPR, KPTR…ERRH, and KSED…PARS. Composition is skewed to basic and acidic residues over residues 113–129 and 460–473; these read SDER…EERP and CLSR…ERRH. Residues 116 to 224 form a required for interaction with HDAC1 region; it reads RGPEAELPPK…GLCERRKYWV (109 aa). Residues 534–545 show a composition bias toward pro residues; it reads TPEPSPAAPSPA. An ALMS motif region spans residues 571–699; it reads TLQEALEVRK…LDQLLQRNAV (129 aa).

In terms of assembly, interacts with HDAC1; the interaction prevents binding of HDAC1 to CDKN1A/p21 and facilitates the acetylation and stabilization of CDKN1A/p21. Interacts with p53/TP53; the interaction inhibits binding of p53/TP53 and MDM2.

Its subcellular location is the cytoplasm. The protein resides in the cytoskeleton. It is found in the microtubule organizing center. The protein localises to the centrosome. In terms of biological role, tumor suppressor that is required to sustain G2/M checkpoint after DNA damage. Acts as a p53/TP53 activator by inhibiting MDM2 binding to p53/TP53 and stimulating non-proteolytic polyubiquitination of p53/TP53. Exhibits ubiquitin ligase (E3) activity and assemble ubiquitin polymers through 'Lys-11'- (K11-), 'Lys-29'- (K29-) and 'Lys-63'- (K63)-linkages, independently of the ubiquitin-conjugating enzyme (E2). Promotes p53/TP53-dependent transcription of CDKN1A/p21, leading to robust checkpoint response. Mediates CDKN1A/p21 protein stability in a ubiquitin-independent manner. Interacts with HDAC1 and prevents binding of HDAC1 to CDKN1A/p21 and facilitates the acetylation and stabilization of CDKN1A/p21. May have a role in the assembly of primary cilia. The chain is (E2-independent) E3 ubiquitin-conjugating enzyme FATS from Homo sapiens (Human).